A 471-amino-acid polypeptide reads, in one-letter code: UTP--glucose-1-phosphate uridylyltransferase (471 aa).

UTP-binding positions include 87 to 90 (LNGG), K101, Q164, and G193. 89–90 (GG) is a substrate binding site. Substrate contacts are provided by residues H194 and 222-224 (NSD). Residues D224 and K362 each coordinate UTP.

Belongs to the UDPGP type 1 family.

Its subcellular location is the cytoplasm. It catalyses the reaction alpha-D-glucose 1-phosphate + UTP + H(+) = UDP-alpha-D-glucose + diphosphate. Plays a central role as a glucosyl donor in cellular metabolic pathways. This is UTP--glucose-1-phosphate uridylyltransferase (UGP) from Astragalus penduliflorus (Mountain lentil).